Here is a 317-residue protein sequence, read N- to C-terminus: D-aminoacyl-tRNA deacylase (317 aa).

The protein belongs to the DtdA deacylase family. Zn(2+) is required as a cofactor. Ubiquitous.

The protein localises to the nucleus. The protein resides in the cytoplasm. It catalyses the reaction a D-aminoacyl-tRNA + H2O = a tRNA + a D-alpha-amino acid + H(+). It carries out the reaction glycyl-tRNA(Ala) + H2O = tRNA(Ala) + glycine + H(+). In terms of biological role, hydrolyzes D-aminoacyl-tRNA into D-amino acid and free tRNA. Broad specificity toward the amino acid, but strict specificity toward the D-isomer. Seems to be required for ethanol tolerance. The protein is D-aminoacyl-tRNA deacylase (GEK1) of Arabidopsis thaliana (Mouse-ear cress).